The primary structure comprises 454 residues: Bifunctional protein GlmU (454 aa).

The tract at residues 1–226 (MALNVVILAA…AIEVEGANNR (226 aa)) is pyrophosphorylase. UDP-N-acetyl-alpha-D-glucosamine is bound by residues 8–11 (LAAG), Lys22, Gln73, 78–79 (GT), 100–102 (YGD), Gly137, Glu151, Asn166, and Asn224. Position 102 (Asp102) interacts with Mg(2+). Asn224 provides a ligand contact to Mg(2+). The segment at 227 to 247 (VQLAQLERAYQAREAEKLMLA) is linker. Residues 248 to 454 (GANLRDPHRI…DWKRPVKIKK (207 aa)) form an N-acetyltransferase region. UDP-N-acetyl-alpha-D-glucosamine is bound by residues Arg330 and Lys348. The active-site Proton acceptor is the His360. 2 residues coordinate UDP-N-acetyl-alpha-D-glucosamine: Tyr363 and Asn374. Acetyl-CoA-binding positions include Ala377, 383–384 (NY), Ser402, Ala420, and Arg437.

This sequence in the N-terminal section; belongs to the N-acetylglucosamine-1-phosphate uridyltransferase family. The protein in the C-terminal section; belongs to the transferase hexapeptide repeat family. In terms of assembly, homotrimer. Mg(2+) is required as a cofactor.

It is found in the cytoplasm. The enzyme catalyses alpha-D-glucosamine 1-phosphate + acetyl-CoA = N-acetyl-alpha-D-glucosamine 1-phosphate + CoA + H(+). It carries out the reaction N-acetyl-alpha-D-glucosamine 1-phosphate + UTP + H(+) = UDP-N-acetyl-alpha-D-glucosamine + diphosphate. Its pathway is nucleotide-sugar biosynthesis; UDP-N-acetyl-alpha-D-glucosamine biosynthesis; N-acetyl-alpha-D-glucosamine 1-phosphate from alpha-D-glucosamine 6-phosphate (route II): step 2/2. The protein operates within nucleotide-sugar biosynthesis; UDP-N-acetyl-alpha-D-glucosamine biosynthesis; UDP-N-acetyl-alpha-D-glucosamine from N-acetyl-alpha-D-glucosamine 1-phosphate: step 1/1. It functions in the pathway bacterial outer membrane biogenesis; LPS lipid A biosynthesis. Functionally, catalyzes the last two sequential reactions in the de novo biosynthetic pathway for UDP-N-acetylglucosamine (UDP-GlcNAc). The C-terminal domain catalyzes the transfer of acetyl group from acetyl coenzyme A to glucosamine-1-phosphate (GlcN-1-P) to produce N-acetylglucosamine-1-phosphate (GlcNAc-1-P), which is converted into UDP-GlcNAc by the transfer of uridine 5-monophosphate (from uridine 5-triphosphate), a reaction catalyzed by the N-terminal domain. The polypeptide is Bifunctional protein GlmU (Shewanella putrefaciens (strain CN-32 / ATCC BAA-453)).